A 695-amino-acid polypeptide reads, in one-letter code: Elongation factor G (695 aa).

Residues 5-280 form the tr-type G domain; sequence SHYRNIGIFA…AVIDFLPSPT (276 aa). GTP contacts are provided by residues 14–21, 78–82, and 132–135; these read AHVDAGKT, DTPGH, and NKLD. The segment at 279–299 is disordered; sequence PTEVDPQPLTDEETGEPTGEV.

The protein belongs to the TRAFAC class translation factor GTPase superfamily. Classic translation factor GTPase family. EF-G/EF-2 subfamily.

The protein localises to the cytoplasm. Its function is as follows. Catalyzes the GTP-dependent ribosomal translocation step during translation elongation. During this step, the ribosome changes from the pre-translocational (PRE) to the post-translocational (POST) state as the newly formed A-site-bound peptidyl-tRNA and P-site-bound deacylated tRNA move to the P and E sites, respectively. Catalyzes the coordinated movement of the two tRNA molecules, the mRNA and conformational changes in the ribosome. This Alteromonas mediterranea (strain DSM 17117 / CIP 110805 / LMG 28347 / Deep ecotype) protein is Elongation factor G.